The chain runs to 959 residues: DNA translocase FtsK 1 (959 aa).

The next 3 membrane-spanning stretches (helical) occupy residues 1-21, 39-59, and 83-103; these read MGLG…WRYV, IWLA…LTSG, and GWTG…PMVF. At 104–959 the chain is on the cytoplasmic side; the sequence is GHSWRQLLAR…REVIAPGGGD (856 aa). Residues 122–427 are disordered; that stretch reads PVQADARHDE…AAPPPPAVPA (306 aa). Basic and acidic residues predominate over residues 126–136; that stretch reads DARHDEADDGL. Low complexity-rich tracts occupy residues 220-229 and 264-286; these read ATPKAATQAP and APSA…DAPA. Residues 287–298 show a composition bias toward pro residues; that stretch reads SAPPEPAEPSPP. Residues 333–379 show a composition bias toward acidic residues; the sequence is PEPEPEPEAETEVTPEAEAEPEAEPEAEAEPEAEAEAEAEAEAEPEA. Over residues 380–403 the composition is skewed to low complexity; sequence EAPAPESVAPALQEAEAATAAEAP. The FtsK domain maps to 605–814; that stretch reads GNPVVTDLAR…FQVSSKIDSR (210 aa). An ATP-binding site is contributed by 625–630; it reads GSGKSV.

Belongs to the FtsK/SpoIIIE/SftA family. In terms of assembly, homohexamer. Forms a ring that surrounds DNA.

The protein resides in the cell inner membrane. In terms of biological role, essential cell division protein that coordinates cell division and chromosome segregation. The N-terminus is involved in assembly of the cell-division machinery. The C-terminus functions as a DNA motor that moves dsDNA in an ATP-dependent manner towards the dif recombination site, which is located within the replication terminus region. Translocation stops specifically at Xer-dif sites, where FtsK interacts with the Xer recombinase, allowing activation of chromosome unlinking by recombination. FtsK orienting polar sequences (KOPS) guide the direction of DNA translocation. FtsK can remove proteins from DNA as it translocates, but translocation stops specifically at XerCD-dif site, thereby preventing removal of XerC and XerD from dif. The protein is DNA translocase FtsK 1 (ftsK1) of Ralstonia nicotianae (strain ATCC BAA-1114 / GMI1000) (Ralstonia solanacearum).